Consider the following 62-residue polypeptide: Large ribosomal subunit protein bL28 (62 aa).

Belongs to the bacterial ribosomal protein bL28 family.

The protein is Large ribosomal subunit protein bL28 of Wolinella succinogenes (strain ATCC 29543 / DSM 1740 / CCUG 13145 / JCM 31913 / LMG 7466 / NCTC 11488 / FDC 602W) (Vibrio succinogenes).